We begin with the raw amino-acid sequence, 78 residues long: ATP synthase subunit c (78 aa).

The next 2 membrane-spanning stretches (helical) occupy residues 11 to 31 (FIGA…VGHV) and 53 to 73 (LFIG…VALL).

Belongs to the ATPase C chain family. F-type ATPases have 2 components, F(1) - the catalytic core - and F(0) - the membrane proton channel. F(1) has five subunits: alpha(3), beta(3), gamma(1), delta(1), epsilon(1). F(0) has four main subunits: a(1), b(1), b'(1) and c(10-14). The alpha and beta chains form an alternating ring which encloses part of the gamma chain. F(1) is attached to F(0) by a central stalk formed by the gamma and epsilon chains, while a peripheral stalk is formed by the delta, b and b' chains.

It localises to the cell inner membrane. Functionally, f(1)F(0) ATP synthase produces ATP from ADP in the presence of a proton or sodium gradient. F-type ATPases consist of two structural domains, F(1) containing the extramembraneous catalytic core and F(0) containing the membrane proton channel, linked together by a central stalk and a peripheral stalk. During catalysis, ATP synthesis in the catalytic domain of F(1) is coupled via a rotary mechanism of the central stalk subunits to proton translocation. In terms of biological role, key component of the F(0) channel; it plays a direct role in translocation across the membrane. A homomeric c-ring of between 10-14 subunits forms the central stalk rotor element with the F(1) delta and epsilon subunits. This chain is ATP synthase subunit c, found in Jannaschia sp. (strain CCS1).